Consider the following 498-residue polypeptide: ATP synthase subunit beta, chloroplastic (498 aa).

ATP is bound at residue 172–179 (GGAGVGKT).

The protein belongs to the ATPase alpha/beta chains family. In terms of assembly, F-type ATPases have 2 components, CF(1) - the catalytic core - and CF(0) - the membrane proton channel. CF(1) has five subunits: alpha(3), beta(3), gamma(1), delta(1), epsilon(1). CF(0) has four main subunits: a(1), b(1), b'(1) and c(9-12).

It is found in the plastid. It localises to the chloroplast thylakoid membrane. It carries out the reaction ATP + H2O + 4 H(+)(in) = ADP + phosphate + 5 H(+)(out). Its function is as follows. Produces ATP from ADP in the presence of a proton gradient across the membrane. The catalytic sites are hosted primarily by the beta subunits. This is ATP synthase subunit beta, chloroplastic from Panax ginseng (Korean ginseng).